The primary structure comprises 233 residues: Small ribosomal subunit protein uS2c (233 aa).

Belongs to the universal ribosomal protein uS2 family.

It localises to the plastid. The protein resides in the cyanelle. This is Small ribosomal subunit protein uS2c (rps2) from Cyanophora paradoxa.